We begin with the raw amino-acid sequence, 2251 residues long: U3 small nucleolar RNA-associated protein 10 (2251 aa).

The HEAT repeat unit spans residues 945 to 983 (VVPLLLTALADAEAAIRLAAIACLAHILAICKYAGDLAK). 2 helical membrane passes run 962–982 (LAAI…GDLA) and 1460–1480 (LLVD…LLVD).

Belongs to the HEATR1/UTP10 family. Component of the ribosomal small subunit (SSU) processome.

The protein resides in the nucleus. The protein localises to the nucleolus. It localises to the membrane. Functionally, involved in nucleolar processing of pre-18S ribosomal RNA. Involved in ribosome biosynthesis. The sequence is that of U3 small nucleolar RNA-associated protein 10 from Mycosarcoma maydis (Corn smut fungus).